A 95-amino-acid polypeptide reads, in one-letter code: MRKYELMYIANPQLDPEKLKGLVANLSNVITSNGGSVLSLKEIGLKDLAYEINKHRKGYYVWMLVEASPEAIAEYKRVVNITESVIRNIEVKEGE.

This sequence belongs to the bacterial ribosomal protein bS6 family.

Functionally, binds together with bS18 to 16S ribosomal RNA. This is Small ribosomal subunit protein bS6 from Acholeplasma laidlawii (strain PG-8A).